A 578-amino-acid polypeptide reads, in one-letter code: Sulfite reductase [NADPH] hemoprotein beta-component (578 aa).

[4Fe-4S] cluster contacts are provided by Cys-441, Cys-447, Cys-487, and Cys-491. Siroheme is bound at residue Cys-491.

Belongs to the nitrite and sulfite reductase 4Fe-4S domain family. As to quaternary structure, alpha(8)-beta(8). The alpha component is a flavoprotein, the beta component is a hemoprotein. The cofactor is siroheme. [4Fe-4S] cluster is required as a cofactor.

It catalyses the reaction hydrogen sulfide + 3 NADP(+) + 3 H2O = sulfite + 3 NADPH + 4 H(+). It participates in sulfur metabolism; hydrogen sulfide biosynthesis; hydrogen sulfide from sulfite (NADPH route): step 1/1. In terms of biological role, component of the sulfite reductase complex that catalyzes the 6-electron reduction of sulfite to sulfide. This is one of several activities required for the biosynthesis of L-cysteine from sulfate. The sequence is that of Sulfite reductase [NADPH] hemoprotein beta-component from Vibrio vulnificus (strain CMCP6).